The sequence spans 239 residues: Exosome complex exonuclease RRP46 homolog (239 aa).

N-acetylmethionine is present on Met-1.

The protein belongs to the RNase PH family. As to quaternary structure, probable component of the RNA exosome complex.

It is found in the nucleus. Its subcellular location is the nucleolus. Probable component of the exosome 3'-&gt;5' exoribonuclease complex, a complex that degrades inherently unstable mRNAs containing AU-rich elements (AREs) within their 3'-untranslated regions. This Arabidopsis thaliana (Mouse-ear cress) protein is Exosome complex exonuclease RRP46 homolog.